We begin with the raw amino-acid sequence, 123 residues long: Histone H2B (123 aa).

Positions 1–31 (MPPKVASKGAKKAASKAKAARSGEKKKKRRR) are disordered. Basic residues predominate over residues 9 to 31 (GAKKAASKAKAARSGEKKKKRRR). O-linked (GlcNAc) serine glycosylation is present at S110. K118 is covalently cross-linked (Glycyl lysine isopeptide (Lys-Gly) (interchain with G-Cter in ubiquitin)).

This sequence belongs to the histone H2B family. The nucleosome is a histone octamer containing two molecules each of H2A, H2B, H3 and H4 assembled in one H3-H4 heterotetramer and two H2A-H2B heterodimers. The octamer wraps approximately 147 bp of DNA. Post-translationally, monoubiquitination of Lys-118 gives a specific tag for epigenetic transcriptional activation and is also prerequisite for histone H3 'Lys-4' and 'Lys-79' methylation. In terms of processing, glcNAcylation at Ser-110 promotes monoubiquitination of Lys-118. It fluctuates in response to extracellular glucose, and associates with transcribed genes.

The protein localises to the nucleus. The protein resides in the chromosome. Its function is as follows. Core component of nucleosome. Nucleosomes wrap and compact DNA into chromatin, limiting DNA accessibility to the cellular machineries which require DNA as a template. Histones thereby play a central role in transcription regulation, DNA repair, DNA replication and chromosomal stability. DNA accessibility is regulated via a complex set of post-translational modifications of histones, also called histone code, and nucleosome remodeling. This is Histone H2B from Platynereis dumerilii (Dumeril's clam worm).